Consider the following 69-residue polypeptide: Putative membrane protein insertion efficiency factor (69 aa).

This sequence belongs to the UPF0161 family.

Its subcellular location is the cell inner membrane. In terms of biological role, could be involved in insertion of integral membrane proteins into the membrane. The polypeptide is Putative membrane protein insertion efficiency factor (Geobacter metallireducens (strain ATCC 53774 / DSM 7210 / GS-15)).